Reading from the N-terminus, the 245-residue chain is 1-(5-phosphoribosyl)-5-[(5-phosphoribosylamino)methylideneamino] imidazole-4-carboxamide isomerase (245 aa).

Asp7 functions as the Proton acceptor in the catalytic mechanism. Asp129 serves as the catalytic Proton donor.

It belongs to the HisA/HisF family.

The protein localises to the cytoplasm. It carries out the reaction 1-(5-phospho-beta-D-ribosyl)-5-[(5-phospho-beta-D-ribosylamino)methylideneamino]imidazole-4-carboxamide = 5-[(5-phospho-1-deoxy-D-ribulos-1-ylimino)methylamino]-1-(5-phospho-beta-D-ribosyl)imidazole-4-carboxamide. The protein operates within amino-acid biosynthesis; L-histidine biosynthesis; L-histidine from 5-phospho-alpha-D-ribose 1-diphosphate: step 4/9. The protein is 1-(5-phosphoribosyl)-5-[(5-phosphoribosylamino)methylideneamino] imidazole-4-carboxamide isomerase of Pectobacterium atrosepticum (strain SCRI 1043 / ATCC BAA-672) (Erwinia carotovora subsp. atroseptica).